Here is a 202-residue protein sequence, read N- to C-terminus: Phospholipase A2 inhibitor gamma subunit A (202 aa).

The N-terminal stretch at 1-19 (MKSLQIICLLFIFVARGSC) is a signal peptide. 8 disulfides stabilise this stretch: C22/C47, C25/C32, C40/C68, C74/C95, C96/C101, C119/C144, C137/C166, and C170/C192.

The protein belongs to the CNF-like-inhibitor family. In terms of assembly, heteromer composed of subunit A and subunit B. Expressed by the liver.

It localises to the secreted. Functionally, inhibits the enzymatic activity of the phospholipase A2 (PLA2). In Elaphe climacophora (Japanese rat snake), this protein is Phospholipase A2 inhibitor gamma subunit A.